The chain runs to 388 residues: MNDRFDLPSAPFDLEGPLAPYAAHSAQTRGRVHAEPPSTSRTEFQRDRDRIIHSTAFRRLEYKTQVFVNHEGDLFRTRLTHSLEVAQIARSIARSLRLNEDLVEAVSLAHDLGHTPFGHAGQDALNDCMKPYGGFEHNLQSLLVVDRLEERYGGFDGLNLTFETREGILKHCSRNNAATLGDLGRRFLEGQQPSLEAQLANLADEVAYNNHDIDDGLRSGLITLEQLEDVPLWAIHRREAEAAFPAVSGRRLINETIRRIINALIVDLIGTTRAGIAEFAPQCIDDVRAAPALVAFSEPMHEEARVLKRFLFDNLYRHYLVMRMSAKARRIIDDLFRVFMDDPRLLPPQYQAKSNPDEQPRWIAHYIAGMTDRYAIKEHRRIFAVDAV.

The tract at residues 24–44 is disordered; it reads HSAQTRGRVHAEPPSTSRTEF. Positions 78–209 constitute an HD domain; the sequence is RLTHSLEVAQ…ANLADEVAYN (132 aa).

The protein belongs to the dGTPase family. Type 2 subfamily.

The polypeptide is Deoxyguanosinetriphosphate triphosphohydrolase-like protein (Ralstonia pickettii (strain 12J)).